Reading from the N-terminus, the 342-residue chain is Uroporphyrinogen decarboxylase (342 aa).

Substrate contacts are provided by residues R26–R30, D76, Y150, S205, and H321.

It belongs to the uroporphyrinogen decarboxylase family. In terms of assembly, homodimer.

The protein resides in the cytoplasm. The catalysed reaction is uroporphyrinogen III + 4 H(+) = coproporphyrinogen III + 4 CO2. Its pathway is porphyrin-containing compound metabolism; protoporphyrin-IX biosynthesis; coproporphyrinogen-III from 5-aminolevulinate: step 4/4. In terms of biological role, catalyzes the decarboxylation of four acetate groups of uroporphyrinogen-III to yield coproporphyrinogen-III. This Sphingopyxis alaskensis (strain DSM 13593 / LMG 18877 / RB2256) (Sphingomonas alaskensis) protein is Uroporphyrinogen decarboxylase.